Here is a 306-residue protein sequence, read N- to C-terminus: Glutaminase (306 aa).

Substrate-binding residues include Ser64, Asn115, Glu159, Asn166, Tyr190, Tyr242, and Val260.

This sequence belongs to the glutaminase family. As to quaternary structure, homotetramer.

The enzyme catalyses L-glutamine + H2O = L-glutamate + NH4(+). The sequence is that of Glutaminase from Aeromonas hydrophila subsp. hydrophila (strain ATCC 7966 / DSM 30187 / BCRC 13018 / CCUG 14551 / JCM 1027 / KCTC 2358 / NCIMB 9240 / NCTC 8049).